A 109-amino-acid polypeptide reads, in one-letter code: Parvalbumin beta (109 aa).

EF-hand domains lie at 38 to 73 (KSKD…FDGK) and 77 to 109 (LTDK…VTKG). The Ca(2+) site is built by aspartate 51, aspartate 53, serine 55, tyrosine 57, glutamate 59, glutamate 62, aspartate 90, aspartate 92, aspartate 94, lysine 96, and glutamate 101.

Belongs to the parvalbumin family.

Its function is as follows. In muscle, parvalbumin is thought to be involved in relaxation after contraction. It binds two calcium ions. The protein is Parvalbumin beta of Boa constrictor (Boa).